We begin with the raw amino-acid sequence, 347 residues long: MSTSLPLADRLNRPIGVLRLSLTARCNLACPYCCPDVEEPPGLLTLEQQIRVIRVATRLGVQTLRLTGGEPLLSRRLLPLLEAVAQARRDRSDPMAGLQAVALTSNGVLLSEPMGRALRAAGLDRITISLDAAEGEAAARMAGLQGGAVAGERLVRQVQDGIAAAFAAGFDPSRGELKLNAVIQRGINDDQLLPLAALARQRGMELRLIEYMDVGNRNQWTLDQVLPAAQMVERINARWPLEPLGRPRGGTARRWRYGDGAGSIGVISSISEPFCGDCNRLRVTADGQAFTCLFSAEGTDLKPALASDLQLEQAMRQLWQRRQDRYSEERDPAAAASTHAEMAYLGG.

The Radical SAM core domain occupies 10–242 (RLNRPIGVLR…ERINARWPLE (233 aa)). Arg19 serves as a coordination point for GTP. 2 residues coordinate [4Fe-4S] cluster: Cys26 and Cys30. An S-adenosyl-L-methionine-binding site is contributed by Tyr32. A [4Fe-4S] cluster-binding site is contributed by Cys33. Arg65 serves as a coordination point for GTP. Gly69 serves as a coordination point for S-adenosyl-L-methionine. Thr104 is a GTP binding site. Ser129 contributes to the S-adenosyl-L-methionine binding site. Residue Lys178 coordinates GTP. Met212 is an S-adenosyl-L-methionine binding site. Residues Cys275 and Cys278 each contribute to the [4Fe-4S] cluster site. GTP is bound at residue 280–282 (RLR). Cys292 serves as a coordination point for [4Fe-4S] cluster.

Belongs to the radical SAM superfamily. MoaA family. In terms of assembly, monomer and homodimer. The cofactor is [4Fe-4S] cluster.

The catalysed reaction is GTP + AH2 + S-adenosyl-L-methionine = (8S)-3',8-cyclo-7,8-dihydroguanosine 5'-triphosphate + 5'-deoxyadenosine + L-methionine + A + H(+). Its pathway is cofactor biosynthesis; molybdopterin biosynthesis. Catalyzes the cyclization of GTP to (8S)-3',8-cyclo-7,8-dihydroguanosine 5'-triphosphate. This Synechococcus sp. (strain CC9605) protein is GTP 3',8-cyclase.